A 297-amino-acid chain; its full sequence is 4-hydroxy-tetrahydrodipicolinate synthase (297 aa).

Residue Thr-55 coordinates pyruvate. Tyr-144 serves as the catalytic Proton donor/acceptor. The active-site Schiff-base intermediate with substrate is the Lys-172. Ile-213 lines the pyruvate pocket.

The protein belongs to the DapA family. In terms of assembly, homotetramer; dimer of dimers.

It is found in the cytoplasm. The catalysed reaction is L-aspartate 4-semialdehyde + pyruvate = (2S,4S)-4-hydroxy-2,3,4,5-tetrahydrodipicolinate + H2O + H(+). Its pathway is amino-acid biosynthesis; L-lysine biosynthesis via DAP pathway; (S)-tetrahydrodipicolinate from L-aspartate: step 3/4. Functionally, catalyzes the condensation of (S)-aspartate-beta-semialdehyde [(S)-ASA] and pyruvate to 4-hydroxy-tetrahydrodipicolinate (HTPA). This Lactococcus lactis subsp. lactis (strain IL1403) (Streptococcus lactis) protein is 4-hydroxy-tetrahydrodipicolinate synthase.